Consider the following 447-residue polypeptide: BAG family molecular chaperone regulator 5 (447 aa).

5 consecutive BAG domains span residues 9 to 86 (SISR…EQNA), 95 to 167 (QNIF…EDCM), 182 to 260 (SVAK…DLEE), 275 to 350 (SILK…DLKE), and 365 to 442 (SHKA…DLKS).

In terms of assembly, binds to the ATPase domain of HSP/HSP70 chaperones. Binds PRKN. Interacts with HSPA8 and JPH2. Expressed in the heart.

Co-chaperone for HSP/HSP70 proteins. It functions as a nucleotide-exchange factor promoting the release of ADP from HSP70, thereby activating HSP70-mediated protein refolding. Has an essential role in maintaining proteostasis at junctional membrane complexes (JMC), where it may function as a scaffold between the HSPA8 chaperone and JMC proteins enabling correct, HSPA8-dependent JMC protein folding. Inhibits both auto-ubiquitination of PRKN and ubiquitination of target proteins by PRKN. This Homo sapiens (Human) protein is BAG family molecular chaperone regulator 5 (BAG5).